The chain runs to 201 residues: Acyl-homoserine-lactone synthase (201 aa).

This sequence belongs to the autoinducer synthase family.

It carries out the reaction a fatty acyl-[ACP] + S-adenosyl-L-methionine = an N-acyl-L-homoserine lactone + S-methyl-5'-thioadenosine + holo-[ACP] + H(+). Required for the synthesis of BHL (N-butanoyl-L-homoserine lactone), and HHL (N-hexanoyl-L-homoserine lactone) autoinducer molecules which bind to RhlR and thus acts in elastase biosynthesis regulation. The sequence is that of Acyl-homoserine-lactone synthase (rhlI) from Pseudomonas aeruginosa (strain ATCC 15692 / DSM 22644 / CIP 104116 / JCM 14847 / LMG 12228 / 1C / PRS 101 / PAO1).